The sequence spans 702 residues: ATP-dependent RNA helicase DDX4 (702 aa).

The disordered stretch occupies residues 22 to 228; that stretch reads FEKDKYSSGA…YIPPPPPEDE (207 aa). Residues 29–46 are compositionally biased toward polar residues; the sequence is SGANGDTFNRTSASSDIG. Gly residues-rich tracts occupy residues 58–68 and 125–137; these read GGFGRGKGFGN and RGSF…GFGL. Composition is skewed to polar residues over residues 141-150 and 195-215; these read NSESDQDQGT and SGKN…SQGP. Phosphoserine occurs at positions 195 and 199. The segment at 201 to 220 is interaction with RANBP9; it reads KSETEGGESSDSQGPKVTYI. Residues 261 to 289 carry the Q motif motif; sequence LTFEEANLCQTLNNNIAKAGYTKLTPVQK. Residues 292–475 enclose the Helicase ATP-binding domain; sequence IPIVLAGRDL…GDFLKSSYLF (184 aa). ATP is bound at residue 305-312; that stretch reads AQTGSGKT. The DEAD box motif lies at 419 to 422; it reads DEAD. A Helicase C-terminal domain is found at 503 to 648; sequence KLVEILRNIG…DVPAWLEEIA (146 aa). Positions 681 to 693 are enriched in polar residues; sequence TLNTAGISSSQAP. Positions 681–702 are disordered; it reads TLNTAGISSSQAPNPVDDESWD. Ser-700 carries the phosphoserine modification.

This sequence belongs to the DEAD box helicase family. DDX4/VASA subfamily. Found in a mRNP complex, at least composed of TDRD1, TDRD6, TDRD7 and DDX4. Interacts with RANBP9. Interacts with RANBP10. Interacts with PIWIL2 and MAEL. Interacts with BMAL1 and CLOCK. Interacts with Tex19.1 and, probably, Tex19.2. Interacts with RBM46. In terms of tissue distribution, testis-specific.

It is found in the cytoplasm. It localises to the perinuclear region. It catalyses the reaction ATP + H2O = ADP + phosphate + H(+). In terms of biological role, ATP-dependent RNA helicase required during spermatogenesis to repress transposable elements and preventing their mobilization, which is essential for the germline integrity. Acts via the piRNA metabolic process, which mediates the repression of transposable elements during meiosis by forming complexes composed of piRNAs and Piwi proteins and governs the methylation and subsequent repression of transposons. Involved in the secondary piRNAs metabolic process, the production of piRNAs in fetal male germ cells through a ping-pong amplification cycle. Required for PIWIL2 slicing-triggered piRNA biogenesis: helicase activity enables utilization of one of the slice cleavage fragments generated by PIWIL2 and processing these pre-piRNAs into piRNAs. The polypeptide is ATP-dependent RNA helicase DDX4 (Mus musculus (Mouse)).